The following is a 537-amino-acid chain: Phosphoenolpyruvate carboxykinase (ATP) (537 aa).

Residues Arg64, Tyr204, and Lys210 each contribute to the substrate site. ATP is bound by residues Lys210, His229, and 245–253 (GLSGTGKTT). The Mn(2+) site is built by Lys210 and His229. Asp266 is a Mn(2+) binding site. ATP contacts are provided by residues Glu294, Arg330, 446 to 447 (RI), and Thr452. Arg330 contributes to the substrate binding site.

It belongs to the phosphoenolpyruvate carboxykinase (ATP) family. As to quaternary structure, monomer. Requires Mn(2+) as cofactor.

It localises to the cytoplasm. It carries out the reaction oxaloacetate + ATP = phosphoenolpyruvate + ADP + CO2. It participates in carbohydrate biosynthesis; gluconeogenesis. Functionally, involved in the gluconeogenesis. Catalyzes the conversion of oxaloacetate (OAA) to phosphoenolpyruvate (PEP) through direct phosphoryl transfer between the nucleoside triphosphate and OAA. In Aliivibrio fischeri (strain ATCC 700601 / ES114) (Vibrio fischeri), this protein is Phosphoenolpyruvate carboxykinase (ATP).